A 598-amino-acid polypeptide reads, in one-letter code: uncharacterized protein (598 aa).

Positions 1 to 23 are enriched in basic and acidic residues; the sequence is MSHEGSRQARDRGVTRSKAEKAR. Disordered stretches follow at residues 1–32, 151–190, and 222–241; these read MSHE…VPQV, FHNE…VTPR, and PSKE…SPQS. The span at 225–235 shows a compositional bias: basic and acidic residues; that stretch reads ESLRSTAEGER. 2 positions are modified to phosphoserine: S238 and S242. Disordered regions lie at residues 366–396 and 551–571; these read RRSQ…SSPR and AEEG…VSKP. Polar residues-rich tracts occupy residues 369–386 and 558–569; these read QAGT…SSRA and APEQQPIQTGVS.

This is an uncharacterized protein from Mus musculus (Mouse).